The primary structure comprises 196 residues: Ribosome maturation factor RimM (196 aa).

The 79-residue stretch at 118 to 196 (QGEYYWRDLI…EMTVDWDPDF (79 aa)) folds into the PRC barrel domain.

The protein belongs to the RimM family. Binds ribosomal protein uS19.

The protein localises to the cytoplasm. Its function is as follows. An accessory protein needed during the final step in the assembly of 30S ribosomal subunit, possibly for assembly of the head region. Essential for efficient processing of 16S rRNA. May be needed both before and after RbfA during the maturation of 16S rRNA. It has affinity for free ribosomal 30S subunits but not for 70S ribosomes. In Alcanivorax borkumensis (strain ATCC 700651 / DSM 11573 / NCIMB 13689 / SK2), this protein is Ribosome maturation factor RimM.